Reading from the N-terminus, the 648-residue chain is FAD-binding monooxygenase trt3 (648 aa).

Residues 118-121 (TWYW), 130-131 (DI), and Tyr-136 each bind FAD. 128-130 (MCD) lines the NADP(+) pocket. Residues 274–280 (TGSTAVQ) and 297–298 (RT) contribute to the NADP(+) site.

It belongs to the FAD-binding monooxygenase family. Requires FAD as cofactor.

It functions in the pathway secondary metabolite biosynthesis; terpenoid biosynthesis. In terms of biological role, FAD-binding monooxygenase; part of the gene cluster that mediates the biosynthesis of terretonin, a fungal meroterpenoid that acts as a mycotoxin. The first step of the pathway is the synthesis of 3,5-dimethylorsellinic acid (DMOA) by the polyketide synthase trt4. DMOA is then prenylated into farnesyl-DMOA by the polyprenyl transferase trt2. Methylation by the methyltransferase trt5 then leads to farnesyl-DMOA methyl ester which is further subject to epoxidation by the FAD-dependent monooxygenase trt8 to yield epoxyfarnesyl-DMOA methyl ester. Cyclization of epoxyfarnesyl-DMOA methyl ester by the terpene cyclase trt1 leads to a tetracycle intermediate which is in turn converted to preterretonin. Dehydrogenase trt9 comes next to transform preterretonin to preterrenoid. The FAD-dependent monooxygenase trt3 is then required for the C-hydroxylation at C16 of preterrenoid to yield terrenoid. The cytochrome P450 trt6 catalyzes three successive oxidations to transform terrenoid into an unstable intermediate, which then undergoes the D-ring expansion and unusual rearrangement of the methoxy group to afford the core skeleton of terretonin. Trt14 catalyzes the D-ring expansion of terretonin involving intramolecular methoxy rearrangement as well as the hydrolysis of the expanded D-ring and the methyl ester moiety. Finally, the nonheme iron-dependent dioxygenase trt7 accomplishes the last two oxidation reactions steps to complete the biosynthesis of terretonin. Terretonin C is produced via spontaneous decarboxylation of the terretonin precursor. Another shunt product of the terretonin biosynthesis is dihydrofarnesyl-DMOA, derived from epoxyfarnesyl-DMOA through hydrolysis of the epoxide. The protein is FAD-binding monooxygenase trt3 of Aspergillus terreus (strain NIH 2624 / FGSC A1156).